Consider the following 171-residue polypeptide: Phosphopantetheine adenylyltransferase (171 aa).

A substrate-binding site is contributed by Thr9. ATP-binding positions include 9 to 10 (TF) and His17. Lys41, Leu73, and Arg87 together coordinate substrate. ATP-binding positions include 88–90 (GLR), Glu98, and 123–129 (YQFISGT).

This sequence belongs to the bacterial CoaD family. In terms of assembly, homohexamer. Requires Mg(2+) as cofactor.

It is found in the cytoplasm. The enzyme catalyses (R)-4'-phosphopantetheine + ATP + H(+) = 3'-dephospho-CoA + diphosphate. Its pathway is cofactor biosynthesis; coenzyme A biosynthesis; CoA from (R)-pantothenate: step 4/5. In terms of biological role, reversibly transfers an adenylyl group from ATP to 4'-phosphopantetheine, yielding dephospho-CoA (dPCoA) and pyrophosphate. The protein is Phosphopantetheine adenylyltransferase of Paraburkholderia xenovorans (strain LB400).